The following is a 488-amino-acid chain: Alpha,alpha-trehalose-phosphate synthase [UDP-forming] 56 kDa subunit (488 aa).

The D-glucose 6-phosphate site is built by Tyr-102 and Asp-156. Residues Arg-293 and Lys-298 each coordinate UDP. Residues Arg-293 and Lys-298 each contribute to the UDP-alpha-D-glucose site. Arg-331 contributes to the D-glucose 6-phosphate binding site. UDP contacts are provided by residues Ile-370 and 396-400 (LVSYE). UDP-alpha-D-glucose-binding positions include Ile-370 and 392 to 400 (DGMNLVSYE).

This sequence belongs to the glycosyltransferase 20 family. Trehalose synthase/phosphatase complex contains three or four polypeptides of 56 kDa (TPS1), 102 kDa (TPS2), 115 kDa (TPS3) and 123 kDa (TSL1).

The enzyme catalyses D-glucose 6-phosphate + UDP-alpha-D-glucose = alpha,alpha-trehalose 6-phosphate + UDP + H(+). It participates in carbohydrate biosynthesis. Functionally, synthase catalytic subunit of the trehalose synthase complex that catalyzes the production of trehalose from glucose-6-phosphate and UDP-alpha-D-glucose in a two step process. Can function independently of the complex. The polypeptide is Alpha,alpha-trehalose-phosphate synthase [UDP-forming] 56 kDa subunit (Kluyveromyces lactis (strain ATCC 8585 / CBS 2359 / DSM 70799 / NBRC 1267 / NRRL Y-1140 / WM37) (Yeast)).